The following is a 166-amino-acid chain: MRMSTTTEIIAHHWAFAVFLIGAVGLCGLMLLGAYFLGGRAQARAKNVPYESGIDSVGSARMRLSAKFYLVAMFFVIFDVEALYLYAWSISIRESGWIGFIEAVIFILVLLAGLFYLVRIGALDWTPTRSNRRVSKPSTVRYASSHPQDISQELSVAGSQQANESR.

The next 3 helical transmembrane spans lie at 16–36 (FAVF…GAYF), 68–88 (FYLV…LYAW), and 98–118 (IGFI…FYLV). Residues 141–166 (RYASSHPQDISQELSVAGSQQANESR) form a disordered region.

This sequence belongs to the complex I subunit 3 family. NDH-1 is composed of 13 different subunits. Subunits NuoA, H, J, K, L, M, N constitute the membrane sector of the complex.

The protein localises to the cell inner membrane. It catalyses the reaction a quinone + NADH + 5 H(+)(in) = a quinol + NAD(+) + 4 H(+)(out). In terms of biological role, NDH-1 shuttles electrons from NADH, via FMN and iron-sulfur (Fe-S) centers, to quinones in the respiratory chain. The immediate electron acceptor for the enzyme in this species is believed to be ubiquinone. Couples the redox reaction to proton translocation (for every two electrons transferred, four hydrogen ions are translocated across the cytoplasmic membrane), and thus conserves the redox energy in a proton gradient. The polypeptide is NADH-quinone oxidoreductase subunit A (Yersinia pseudotuberculosis serotype IB (strain PB1/+)).